The primary structure comprises 67 residues: Large ribosomal subunit protein uL29 (67 aa).

It belongs to the universal ribosomal protein uL29 family.

This is Large ribosomal subunit protein uL29 (rpmC) from Halalkalibacterium halodurans (strain ATCC BAA-125 / DSM 18197 / FERM 7344 / JCM 9153 / C-125) (Bacillus halodurans).